Here is a 266-residue protein sequence, read N- to C-terminus: Inositol-1-monophosphatase (266 aa).

Glu69, Asp86, Leu88, and Asp89 together coordinate Mg(2+). Glu69 is a binding site for substrate. Residues 88-91, Arg185, and Asp214 each bind substrate; that span reads LDGT. Asp214 contacts Mg(2+).

The protein belongs to the inositol monophosphatase superfamily. Requires Mg(2+) as cofactor.

It carries out the reaction a myo-inositol phosphate + H2O = myo-inositol + phosphate. The polypeptide is Inositol-1-monophosphatase (suhB) (Mesorhizobium japonicum (strain LMG 29417 / CECT 9101 / MAFF 303099) (Mesorhizobium loti (strain MAFF 303099))).